The primary structure comprises 666 residues: Calmodulin-binding receptor kinase CaMRLK (666 aa).

The first 17 residues, 1–17 (MFLKLFLLLSLVSFSHS), serve as a signal peptide directing secretion. The Extracellular segment spans residues 18–297 (DSSSTVSCPN…KTHRTNHTPL (280 aa)). N-linked (GlcNAc...) asparagine glycans are attached at residues Asn27, Asn45, Asn52, Asn68, Asn78, Asn89, Asn110, Asn126, Asn137, Asn148, Asn154, Asn189, Asn212, Asn229, and Asn261. LRR repeat units follow at residues 79 to 103 (LTRL…LWSM), 105 to 127 (GLVS…PVNG), 130 to 152 (LSAV…FTGF), 153 to 177 (TNLT…SLSG), 178 to 197 (LRHL…PISG), 198 to 224 (LKSL…NLNH), and 226 to 246 (QFLN…KYRK). A helical transmembrane segment spans residues 298-318 (VIGLSSSLGALIIVIFAAAII). Positions 319–337 (LIRRRMKSARTKSRWAISN) are calmodulin binding. The Cytoplasmic portion of the chain corresponds to 319-666 (LIRRRMKSAR…LLKDIRTVSR (348 aa)). The 267-residue stretch at 395–661 (FGTESVISDG…QQVLGLLKDI (267 aa)) folds into the Protein kinase domain. Residues 401-409 (ISDGTCGPL) and Lys423 contribute to the ATP site.

Belongs to the protein kinase superfamily. Ser/Thr protein kinase family. Binds calmodulin (CaM) in a calcium-dependent manner. Interacts with CAM1, but not with CAM8. Mn(2+) is required as a cofactor. The cofactor is Mg(2+). Calmodulin (CaM)-independent autophosphorylation. As to expression, expressed in reproductive and vegetative tissues, with higher levels in seedlings and flowers, but not in leaves.

The protein localises to the cell membrane. The enzyme catalyses L-seryl-[protein] + ATP = O-phospho-L-seryl-[protein] + ADP + H(+). It catalyses the reaction L-threonyl-[protein] + ATP = O-phospho-L-threonyl-[protein] + ADP + H(+). Its activity is regulated as follows. Not stimulated by calmodulin (CaM). Its function is as follows. Can phosphorylate the myelin basic protein in vitro. Required for endosperm development in embryos. Maybe involved in auxin and osmotic stress responses. This chain is Calmodulin-binding receptor kinase CaMRLK, found in Arabidopsis thaliana (Mouse-ear cress).